We begin with the raw amino-acid sequence, 500 residues long: Protein O-glucosyltransferase 2 (500 aa).

Residues 1–22 form the signal peptide; sequence MLRKLLLLLMSCIIFLTRRSKA. The stretch at 23 to 128 is one Filamin repeat; that stretch reads AAAASASKTL…LVGKSPYVLR (106 aa). N-linked (GlcNAc...) asparagine glycans are attached at residues Asn-60 and Asn-259. The Prevents secretion from ER signature appears at 497–500; the sequence is RDEL.

Belongs to the KDELC family.

It localises to the endoplasmic reticulum lumen. It catalyses the reaction L-seryl-[EGF-like domain protein] + UDP-alpha-D-glucose = 3-O-(beta-D-glucosyl)-L-seryl-[EGF-like domain protein] + UDP + H(+). It carries out the reaction L-seryl-[EGF-like domain protein] + UDP-alpha-D-xylose = 3-O-(beta-D-xylosyl)-L-seryl-[EGF-like domain protein] + UDP + H(+). Its pathway is protein modification; protein glycosylation. In terms of biological role, protein glucosyltransferase that catalyzes the transfer of glucose from UDP-glucose to a serine residue within the consensus sequence peptide C-X-N-T-X-G-S-F-X-C. Can also catalyze the transfer of xylose from UDP-xylose but less efficiently. The protein is Protein O-glucosyltransferase 2 (poglut2) of Danio rerio (Zebrafish).